A 937-amino-acid chain; its full sequence is MANHVPASFLTRANALFRKNLTYQKRNIWSNVRLIVIPFYLCVLLVGIQVLFDTQVNNSADNRCGCRCIHKNGDGKCERKSCGLQYSSLTQASFCAFPNPPPLLPLLQIPRPETRLVDPARSSCRRTGSCPVTILVTGNNHTLGETLSRNLLSTSFAVNSSDHFLRNLAYNVLGTISEADYTNYLDPGIHSDLPIFQIRPYCTPTTNLSFSFRQPPITFHKEVRCVQGLNLWRNNSVEVNDEIFKGYRQGNHEEIINEVAAAYDLLDTDRNKFNVTIWYNSSYKGNFKVQDRRVKYVRVPRSVNMVSNAYLRFLRGPGTKMLFDFVKEMPKQESMLRVDIASVIGPIFLTWVIVLLFPVILNSLVYEKQQHLRIIMKMHGLGDGPYWMITYAYFLAISTLYIICLMIFGSAIGLKFFRFNDYSIQFIFYFLCINLQISIAFLVSSAFSKVETASVAAYLYVFGSGLLGGFLFQFMLEGLSFPRGWIFVMELYPGFSLYRGLYEFSQYALKRQLNGSDGMKWKYFSDSAMDEVFYIIIIEWFLALIAAYYMDRVSSSAKDPFLFLKNLIKKSPSPQRHSLQRLGSSVSVEMEKLDVVEERAKVEQLMLESSTSHAIVCDKLKKVYPGRDGNPPKMAVGGLSIAVPPGECFGMLGPNGAGKTSFINMMTGLVKPTSGTALVESLDICQDMDKVYTSMGVCPQHDLLWETLTGREHLLFYGRLKNLKGSDLNQAIEESLKSVNLSREGVADKPAGKYSGGMKRRLSVAISLIGSPKVVYMDEPSTGLDPASRRSLWTAIKGAKKHTAIILTTHSMEEAEFLCDRLGIFVDGRLQCVGNPKELKARYGGSYVLTMTTSSEHEKDVEMLIQDVSPNAKKIYHIAGTQKFEIPKDEVRIAELFQAVEKAKGNFRVFAWGLADTTLEDVFIKVARTAQASNVFS.

A run of 7 helical transmembrane segments spans residues 34-54 (LIVI…LFDT), 340-360 (IASV…FPVI), 394-414 (FLAI…AIGL), 423-443 (SIQF…AFLV), 455-475 (VAAY…FQFM), 478-498 (GLSF…FSLY), and 528-548 (AMDE…IAAY). The region spanning 618–852 (DKLKKVYPGR…YGGSYVLTMT (235 aa)) is the ABC transporter domain. 653–660 (GPNGAGKT) lines the ATP pocket.

This sequence belongs to the ABC transporter superfamily. ABCA family. CPR flippase (TC 3.A.1.211) subfamily.

The protein localises to the membrane. This is ABC transporter A family member 4 (ABCA4) from Arabidopsis thaliana (Mouse-ear cress).